A 356-amino-acid chain; its full sequence is Protein RecA (356 aa).

67-74 (GPESSGKT) provides a ligand contact to ATP.

This sequence belongs to the RecA family.

It localises to the cytoplasm. Its function is as follows. Can catalyze the hydrolysis of ATP in the presence of single-stranded DNA, the ATP-dependent uptake of single-stranded DNA by duplex DNA, and the ATP-dependent hybridization of homologous single-stranded DNAs. It interacts with LexA causing its activation and leading to its autocatalytic cleavage. The protein is Protein RecA of Yersinia pestis bv. Antiqua (strain Angola).